A 204-amino-acid chain; its full sequence is Holliday junction branch migration complex subunit RuvA (204 aa).

The domain I stretch occupies residues 1–67 (MIAFLSGHLV…ETELVLYGFG (67 aa)). Positions 68–146 (SPAERDVFVE…HWRQGLENAD (79 aa)) are domain II. A flexible linker region spans residues 147 to 156 (RPLAGGPPPA). Positions 156 to 204 (AIREEVEMALLALGYSLQEIQAALQALPSQPRPTEEWLRDAITYLSRQP) are domain III.

This sequence belongs to the RuvA family. In terms of assembly, homotetramer. Forms an RuvA(8)-RuvB(12)-Holliday junction (HJ) complex. HJ DNA is sandwiched between 2 RuvA tetramers; dsDNA enters through RuvA and exits via RuvB. An RuvB hexamer assembles on each DNA strand where it exits the tetramer. Each RuvB hexamer is contacted by two RuvA subunits (via domain III) on 2 adjacent RuvB subunits; this complex drives branch migration. In the full resolvosome a probable DNA-RuvA(4)-RuvB(12)-RuvC(2) complex forms which resolves the HJ.

It is found in the cytoplasm. Its function is as follows. The RuvA-RuvB-RuvC complex processes Holliday junction (HJ) DNA during genetic recombination and DNA repair, while the RuvA-RuvB complex plays an important role in the rescue of blocked DNA replication forks via replication fork reversal (RFR). RuvA specifically binds to HJ cruciform DNA, conferring on it an open structure. The RuvB hexamer acts as an ATP-dependent pump, pulling dsDNA into and through the RuvAB complex. HJ branch migration allows RuvC to scan DNA until it finds its consensus sequence, where it cleaves and resolves the cruciform DNA. In Synechococcus sp. (strain JA-3-3Ab) (Cyanobacteria bacterium Yellowstone A-Prime), this protein is Holliday junction branch migration complex subunit RuvA.